The sequence spans 216 residues: Probable nicotinate-nucleotide adenylyltransferase (216 aa).

This sequence belongs to the NadD family.

The catalysed reaction is nicotinate beta-D-ribonucleotide + ATP + H(+) = deamido-NAD(+) + diphosphate. It functions in the pathway cofactor biosynthesis; NAD(+) biosynthesis; deamido-NAD(+) from nicotinate D-ribonucleotide: step 1/1. Its function is as follows. Catalyzes the reversible adenylation of nicotinate mononucleotide (NaMN) to nicotinic acid adenine dinucleotide (NaAD). The polypeptide is Probable nicotinate-nucleotide adenylyltransferase (Pelobacter propionicus (strain DSM 2379 / NBRC 103807 / OttBd1)).